We begin with the raw amino-acid sequence, 228 residues long: Cytochrome c oxidase subunit 2 (228 aa).

The Mitochondrial intermembrane portion of the chain corresponds to 1–26; it reads MTTWANMNLQDSASPIMEQLIYFHDH. A helical transmembrane segment spans residues 27 to 48; it reads ALMIIIMILMVVSYMMIAMVFN. Residues 49-62 are Mitochondrial matrix-facing; it reads KYINRFLLEGQMIE. Residues 63–82 form a helical membrane-spanning segment; the sequence is LAWTIAPAVILIFIAVPSLR. Over 83 to 228 the chain is Mitochondrial intermembrane; sequence LLYLMDEINT…FINWILKMNM (146 aa). Positions 161, 196, 198, 200, 204, and 207 each coordinate Cu cation. E198 is a binding site for Mg(2+).

The protein belongs to the cytochrome c oxidase subunit 2 family. In terms of assembly, component of the cytochrome c oxidase (complex IV, CIV), a multisubunit enzyme composed of a catalytic core of 3 subunits and several supernumerary subunits. The complex exists as a monomer or a dimer and forms supercomplexes (SCs) in the inner mitochondrial membrane with ubiquinol-cytochrome c oxidoreductase (cytochrome b-c1 complex, complex III, CIII). The cofactor is Cu cation.

The protein localises to the mitochondrion inner membrane. It catalyses the reaction 4 Fe(II)-[cytochrome c] + O2 + 8 H(+)(in) = 4 Fe(III)-[cytochrome c] + 2 H2O + 4 H(+)(out). Component of the cytochrome c oxidase, the last enzyme in the mitochondrial electron transport chain which drives oxidative phosphorylation. The respiratory chain contains 3 multisubunit complexes succinate dehydrogenase (complex II, CII), ubiquinol-cytochrome c oxidoreductase (cytochrome b-c1 complex, complex III, CIII) and cytochrome c oxidase (complex IV, CIV), that cooperate to transfer electrons derived from NADH and succinate to molecular oxygen, creating an electrochemical gradient over the inner membrane that drives transmembrane transport and the ATP synthase. Cytochrome c oxidase is the component of the respiratory chain that catalyzes the reduction of oxygen to water. Electrons originating from reduced cytochrome c in the intermembrane space (IMS) are transferred via the dinuclear copper A center (CU(A)) of subunit 2 and heme A of subunit 1 to the active site in subunit 1, a binuclear center (BNC) formed by heme A3 and copper B (CU(B)). The BNC reduces molecular oxygen to 2 water molecules using 4 electrons from cytochrome c in the IMS and 4 protons from the mitochondrial matrix. This chain is Cytochrome c oxidase subunit 2 (COII), found in Periplaneta americana (American cockroach).